Reading from the N-terminus, the 225-residue chain is PKHD-type hydroxylase YbiX (225 aa).

Residues 78–177 (TLSTPLFNRY…RVASFMWIQS (100 aa)) enclose the Fe2OG dioxygenase domain. Fe cation-binding residues include H96, D98, and H158. R168 serves as a coordination point for 2-oxoglutarate.

It depends on Fe(2+) as a cofactor. The cofactor is L-ascorbate.

This is PKHD-type hydroxylase YbiX from Shigella boydii serotype 18 (strain CDC 3083-94 / BS512).